A 353-amino-acid polypeptide reads, in one-letter code: Phosphoribosylformylglycinamidine cyclo-ligase (353 aa).

The protein belongs to the AIR synthase family.

It localises to the cytoplasm. It catalyses the reaction 2-formamido-N(1)-(5-O-phospho-beta-D-ribosyl)acetamidine + ATP = 5-amino-1-(5-phospho-beta-D-ribosyl)imidazole + ADP + phosphate + H(+). It participates in purine metabolism; IMP biosynthesis via de novo pathway; 5-amino-1-(5-phospho-D-ribosyl)imidazole from N(2)-formyl-N(1)-(5-phospho-D-ribosyl)glycinamide: step 2/2. This chain is Phosphoribosylformylglycinamidine cyclo-ligase, found in Magnetococcus marinus (strain ATCC BAA-1437 / JCM 17883 / MC-1).